A 396-amino-acid polypeptide reads, in one-letter code: S-adenosylmethionine synthase (396 aa).

Histidine 16 is a binding site for ATP. Aspartate 18 lines the Mg(2+) pocket. Residue glutamate 44 coordinates K(+). L-methionine-binding residues include glutamate 57 and glutamine 100. Positions 100–110 (QSVDIAQGVDR) are flexible loop. Residues 165-167 (DAK), aspartate 240, 246-247 (RK), alanine 263, and lysine 267 contribute to the ATP site. Aspartate 240 contacts L-methionine. Residue lysine 271 participates in L-methionine binding.

The protein belongs to the AdoMet synthase family. In terms of assembly, homotetramer; dimer of dimers. Requires Mg(2+) as cofactor. The cofactor is K(+).

The protein resides in the cytoplasm. It catalyses the reaction L-methionine + ATP + H2O = S-adenosyl-L-methionine + phosphate + diphosphate. The protein operates within amino-acid biosynthesis; S-adenosyl-L-methionine biosynthesis; S-adenosyl-L-methionine from L-methionine: step 1/1. Its function is as follows. Catalyzes the formation of S-adenosylmethionine (AdoMet) from methionine and ATP. The overall synthetic reaction is composed of two sequential steps, AdoMet formation and the subsequent tripolyphosphate hydrolysis which occurs prior to release of AdoMet from the enzyme. This chain is S-adenosylmethionine synthase, found in Stutzerimonas stutzeri (strain A1501) (Pseudomonas stutzeri).